The sequence spans 408 residues: MDDTAPIDWKRNLYIAWLGCFFTGAAFSLVMPFLSLYVEQLGIQGHEALNLWSGVVFSITFLFSAIASPFWGRLADRKGRKLMLLRSALGMAIVMALMGLVQNIWQFLLLRAALGVLGGFVPNANALIAIQVPRNRSGWALGTLSTGAVGGALLGPLLGGYLADTFGLRPVFFITAVVLFICFLVTFFFIRERIEPVREKGMLSGRQVMVSLQNPHLVMSLFVTTLIIQVATGSVAPILTLYVRELAGQTDNLAFISGAIAAIPGVSALLSAPRLGKLGDKIGPERILVAMLILSVLLLIPMAFVQSPWQLAVLRFLLGAADGALLPAVQTLLIYHSSHQVAGRIFSYNQSFRDVGNVTGPLLGASVSASFGFRAVFLVTASVVMINAFYSWLSLRRKSNRELVSEAE.

10 helical membrane passes run 13-33 (LYIA…VMPF), 51-71 (LWSG…SPFW), 89-109 (LGMA…QFLL), 112-132 (AALG…AIQV), 138-158 (GWAL…GPLL), 170-190 (PVFF…FFFI), 221-241 (LFVT…ILTL), 253-273 (LAFI…LSAP), 287-307 (ILVA…FVQS), and 375-395 (AVFL…WLSL).

It belongs to the major facilitator superfamily. DHA1 family. MdtG (TC 2.A.1.2.20) subfamily.

The protein localises to the cell inner membrane. The chain is Multidrug resistance protein MdtG from Dickeya zeae (strain Ech586) (Dickeya dadantii (strain Ech586)).